We begin with the raw amino-acid sequence, 350 residues long: MLTQRQKKILQAIVRQYTSTGQPVGSKHLAEKLPFKVSSATVRNEMAVLEDNDLILKEHSSSGRIPSKRGYRYYVDNLLDPQAVTDNDLVVIQNSLGNGFQKIDEIISHSADILSNLTSYTAFTLKPEQESVRLSGFRVVPLGNHKVIAILVTDSGEVENQSFTLPPDIDTDAMQAVIRMINDQLVGLPLSEVVKRLKDDIPLQVLHYMHSPDGFLDIFDNVLSQAARERFFVGGRLNLLDFASTHDPHAIQSLYGLLDKNDNLSNILDSTLTSDNGVNVKIGQEISKNKLLDDYSLITASYNVEQYGRGIIAVLGPTRMPYSRTIGIVNAFRQELAKRLLDFYRHYYDS.

It belongs to the HrcA family.

Negative regulator of class I heat shock genes (grpE-dnaK-dnaJ and groELS operons). Prevents heat-shock induction of these operons. This is Heat-inducible transcription repressor HrcA from Limosilactobacillus reuteri (strain DSM 20016) (Lactobacillus reuteri).